The sequence spans 388 residues: Succinate--CoA ligase [ADP-forming] subunit beta (388 aa).

Residues K46, 53–55, E99, C102, and E107 contribute to the ATP site; that span reads GRG. N199 and D213 together coordinate Mg(2+). Substrate-binding positions include N264 and 321–323; that span reads GIV.

Belongs to the succinate/malate CoA ligase beta subunit family. Heterotetramer of two alpha and two beta subunits. It depends on Mg(2+) as a cofactor.

The catalysed reaction is succinate + ATP + CoA = succinyl-CoA + ADP + phosphate. It carries out the reaction GTP + succinate + CoA = succinyl-CoA + GDP + phosphate. The protein operates within carbohydrate metabolism; tricarboxylic acid cycle; succinate from succinyl-CoA (ligase route): step 1/1. Its function is as follows. Succinyl-CoA synthetase functions in the citric acid cycle (TCA), coupling the hydrolysis of succinyl-CoA to the synthesis of either ATP or GTP and thus represents the only step of substrate-level phosphorylation in the TCA. The beta subunit provides nucleotide specificity of the enzyme and binds the substrate succinate, while the binding sites for coenzyme A and phosphate are found in the alpha subunit. This chain is Succinate--CoA ligase [ADP-forming] subunit beta, found in Actinobacillus pleuropneumoniae serotype 5b (strain L20).